The sequence spans 128 residues: Aspartate 1-decarboxylase (128 aa).

The active-site Schiff-base intermediate with substrate; via pyruvic acid is Ser-25. A Pyruvic acid (Ser) modification is found at Ser-25. Thr-57 lines the substrate pocket. The active-site Proton donor is the Tyr-58. Residue 73–75 coordinates substrate; the sequence is GSA.

This sequence belongs to the PanD family. In terms of assembly, heterooctamer of four alpha and four beta subunits. It depends on pyruvate as a cofactor. Post-translationally, is synthesized initially as an inactive proenzyme, which is activated by self-cleavage at a specific serine bond to produce a beta-subunit with a hydroxyl group at its C-terminus and an alpha-subunit with a pyruvoyl group at its N-terminus.

The protein resides in the cytoplasm. It catalyses the reaction L-aspartate + H(+) = beta-alanine + CO2. Its pathway is cofactor biosynthesis; (R)-pantothenate biosynthesis; beta-alanine from L-aspartate: step 1/1. Catalyzes the pyruvoyl-dependent decarboxylation of aspartate to produce beta-alanine. The chain is Aspartate 1-decarboxylase from Paraburkholderia phytofirmans (strain DSM 17436 / LMG 22146 / PsJN) (Burkholderia phytofirmans).